The sequence spans 468 residues: Argininosuccinate lyase (468 aa).

This sequence belongs to the lyase 1 family. Argininosuccinate lyase subfamily.

Its subcellular location is the cytoplasm. It catalyses the reaction 2-(N(omega)-L-arginino)succinate = fumarate + L-arginine. It participates in amino-acid biosynthesis; L-arginine biosynthesis; L-arginine from L-ornithine and carbamoyl phosphate: step 3/3. The protein is Argininosuccinate lyase of Sphingopyxis alaskensis (strain DSM 13593 / LMG 18877 / RB2256) (Sphingomonas alaskensis).